Reading from the N-terminus, the 236-residue chain is UPF0173 metal-dependent hydrolase Mnod_3315 (236 aa).

Belongs to the UPF0173 family.

In Methylobacterium nodulans (strain LMG 21967 / CNCM I-2342 / ORS 2060), this protein is UPF0173 metal-dependent hydrolase Mnod_3315.